Here is a 192-residue protein sequence, read N- to C-terminus: Epididymal-specific lipocalin-5 (192 aa).

Positions 1 to 26 (MCSVARHMESIMLFTLLGLCVGLAAG) are cleaved as a signal peptide. Cysteine 89 and cysteine 183 are joined by a disulfide.

The protein belongs to the calycin superfamily. Lipocalin family. Post-translationally, 2 different forms with differently processed N-termini exist. Epididymal fluid of the caudal and corpus regions (at protein level).

The protein localises to the secreted. Its function is as follows. Associates with spermatozoa in the epididymal fluid but does not bind tightly to them. Binds both all-trans and 13-cis retinoic acid. May act as a retinoid carrier protein which is required for epididymal function and/or sperm maturation. In Mus musculus (Mouse), this protein is Epididymal-specific lipocalin-5.